A 342-amino-acid chain; its full sequence is Ribosomal RNA small subunit methyltransferase C (342 aa).

It belongs to the methyltransferase superfamily. RsmC family. As to quaternary structure, monomer.

It is found in the cytoplasm. It carries out the reaction guanosine(1207) in 16S rRNA + S-adenosyl-L-methionine = N(2)-methylguanosine(1207) in 16S rRNA + S-adenosyl-L-homocysteine + H(+). In terms of biological role, specifically methylates the guanine in position 1207 of 16S rRNA in the 30S particle. The sequence is that of Ribosomal RNA small subunit methyltransferase C from Citrobacter koseri (strain ATCC BAA-895 / CDC 4225-83 / SGSC4696).